Reading from the N-terminus, the 473-residue chain is Ribulose bisphosphate carboxylase large chain (473 aa).

Residues N116 and T166 each coordinate substrate. Residue K168 is the Proton acceptor of the active site. A substrate-binding site is contributed by K170. Mg(2+)-binding residues include K194, D196, and E197. K194 is subject to N6-carboxylysine. H287 (proton acceptor) is an active-site residue. Residues R288, H320, and S372 each coordinate substrate.

This sequence belongs to the RuBisCO large chain family. Type I subfamily. Heterohexadecamer of 8 large chains and 8 small chains. Requires Mg(2+) as cofactor.

The enzyme catalyses 2 (2R)-3-phosphoglycerate + 2 H(+) = D-ribulose 1,5-bisphosphate + CO2 + H2O. It catalyses the reaction D-ribulose 1,5-bisphosphate + O2 = 2-phosphoglycolate + (2R)-3-phosphoglycerate + 2 H(+). Functionally, ruBisCO catalyzes two reactions: the carboxylation of D-ribulose 1,5-bisphosphate, the primary event in carbon dioxide fixation, as well as the oxidative fragmentation of the pentose substrate. Both reactions occur simultaneously and in competition at the same active site. This Alkalilimnicola ehrlichii (strain ATCC BAA-1101 / DSM 17681 / MLHE-1) protein is Ribulose bisphosphate carboxylase large chain.